Reading from the N-terminus, the 443-residue chain is GTPase Der (443 aa).

EngA-type G domains lie at 3 to 167 and 176 to 349; these read PVIA…PEEK and IKIA…QSIQ. Residues 9-16, 56-60, 119-122, 182-189, 229-233, and 294-297 contribute to the GTP site; these read GRPNVGKS, DTGGL, NKAD, DTAGI, and NKWD. The KH-like domain occupies 350 to 434; the sequence is QELTTGQLTR…PVHIKLKTDP (85 aa).

Belongs to the TRAFAC class TrmE-Era-EngA-EngB-Septin-like GTPase superfamily. EngA (Der) GTPase family. As to quaternary structure, associates with the 50S ribosomal subunit.

Functionally, GTPase that plays an essential role in the late steps of ribosome biogenesis. In Coxiella burnetii (strain CbuG_Q212) (Coxiella burnetii (strain Q212)), this protein is GTPase Der.